The sequence spans 616 residues: Glutamine--fructose-6-phosphate aminotransferase [isomerizing] (616 aa).

Cys-2 functions as the Nucleophile; for GATase activity in the catalytic mechanism. Residues 2 to 221 enclose the Glutamine amidotransferase type-2 domain; sequence CGIVGYVGTD…QDQIVTITPE (220 aa). 2 consecutive SIS domains span residues 288-428 and 461-606; these read LGDE…VRGT and LAHW…VDQP. Lys-611 (for Fru-6P isomerization activity) is an active-site residue.

In terms of assembly, homodimer.

The protein localises to the cytoplasm. It carries out the reaction D-fructose 6-phosphate + L-glutamine = D-glucosamine 6-phosphate + L-glutamate. In terms of biological role, catalyzes the first step in hexosamine metabolism, converting fructose-6P into glucosamine-6P using glutamine as a nitrogen source. In Leifsonia xyli subsp. xyli (strain CTCB07), this protein is Glutamine--fructose-6-phosphate aminotransferase [isomerizing].